The sequence spans 153 residues: Ribosome maturation factor RimP (153 aa).

The protein belongs to the RimP family.

Its subcellular location is the cytoplasm. Functionally, required for maturation of 30S ribosomal subunits. The chain is Ribosome maturation factor RimP from Nostoc sp. (strain PCC 7120 / SAG 25.82 / UTEX 2576).